We begin with the raw amino-acid sequence, 191 residues long: Dephospho-CoA kinase (191 aa).

Residues 3–191 form the DPCK domain; sequence AIGITGSYAS…KLILVIARKL (189 aa). Residue 11 to 16 coordinates ATP; it reads ASGKTF.

Belongs to the CoaE family.

Its subcellular location is the cytoplasm. The catalysed reaction is 3'-dephospho-CoA + ATP = ADP + CoA + H(+). It functions in the pathway cofactor biosynthesis; coenzyme A biosynthesis; CoA from (R)-pantothenate: step 5/5. Catalyzes the phosphorylation of the 3'-hydroxyl group of dephosphocoenzyme A to form coenzyme A. This chain is Dephospho-CoA kinase, found in Rickettsia felis (strain ATCC VR-1525 / URRWXCal2) (Rickettsia azadi).